Consider the following 176-residue polypeptide: Ribosome maturation factor RimM (176 aa).

The PRC barrel domain maps to 97–176 (EDEFYWRDLI…QITVDWDPDF (80 aa)).

This sequence belongs to the RimM family. In terms of assembly, binds ribosomal protein uS19.

It localises to the cytoplasm. An accessory protein needed during the final step in the assembly of 30S ribosomal subunit, possibly for assembly of the head region. Essential for efficient processing of 16S rRNA. May be needed both before and after RbfA during the maturation of 16S rRNA. It has affinity for free ribosomal 30S subunits but not for 70S ribosomes. This is Ribosome maturation factor RimM from Shewanella sediminis (strain HAW-EB3).